The chain runs to 246 residues: Sugar fermentation stimulation protein homolog (246 aa).

This sequence belongs to the SfsA family.

This chain is Sugar fermentation stimulation protein homolog, found in Prochlorococcus marinus (strain MIT 9312).